Reading from the N-terminus, the 859-residue chain is Active breakpoint cluster region-related protein (859 aa).

The disordered stretch occupies residues 31–84 (AEGHEEQKGPPEGSETMPYIDESPTMSPQLSARSQGGGESISPTPPEGLAPGVE). Residues 54-64 (PTMSPQLSARS) are compositionally biased toward polar residues. S57 carries the phosphoserine modification. In terms of domain architecture, DH spans 91–284 (MRKLVLSGFL…QNFLSSINED (194 aa)). Residues 301 to 459 (QLVKDGFLVE…WREAIQKLQK (159 aa)) form the PH domain. In terms of domain architecture, C2 spans 484-613 (TVHNIPVTSN…ESKNWHTDVI (130 aa)). Residues 647–845 (VKISVVTKRE…YYLQHPPISF (199 aa)) enclose the Rho-GAP domain.

Interacts with DLG4. As to expression, expressed in brain, including the cortex, hippocampus, cerebellum, and brainstem, as well as the spinal cord (at protein level).

The protein localises to the cell projection. The protein resides in the dendritic spine. It is found in the axon. It localises to the synapse. Its function is as follows. Protein with a unique structure having two opposing regulatory activities toward small GTP-binding proteins. The C-terminus is a GTPase-activating protein domain which stimulates GTP hydrolysis by RAC1, RAC2 and CDC42. Accelerates the intrinsic rate of GTP hydrolysis of RAC1 or CDC42, leading to down-regulation of the active GTP-bound form. The central Dbl homology (DH) domain functions as guanine nucleotide exchange factor (GEF) that modulates the GTPases CDC42, RHOA and RAC1. Promotes the conversion of CDC42, RHOA and RAC1 from the GDP-bound to the GTP-bound form. Functions as an important negative regulator of neuronal RAC1 activity. Regulates macrophage functions such as CSF-1 directed motility and phagocytosis through the modulation of RAC1 activity. The chain is Active breakpoint cluster region-related protein from Rattus norvegicus (Rat).